We begin with the raw amino-acid sequence, 313 residues long: Intracellular endo-alpha-(1-&gt;5)-L-arabinanase (313 aa).

Aspartate 27 functions as the Proton acceptor in the catalytic mechanism. Residues aspartate 27, glycine 105, 144 to 147 (NAID), and 164 to 166 (SFW) contribute to the substrate site. Glutamate 201 serves as the catalytic Proton donor. Histidine 271 contacts Ca(2+).

This sequence belongs to the glycosyl hydrolase 43 family. As to quaternary structure, monomer. It depends on Ca(2+) as a cofactor.

It localises to the cytoplasm. It catalyses the reaction Endohydrolysis of (1-&gt;5)-alpha-arabinofuranosidic linkages in (1-&gt;5)-arabinans.. The protein operates within glycan metabolism; L-arabinan degradation. Functionally, involved in the degradation of arabinan and is a key enzyme in the complete degradation of the plant cell wall. Catalyzes the cleavage of endo alpha-(1-&gt;5)-L-arabinofuranosyl residues in debranched arabinan. The chain is Intracellular endo-alpha-(1-&gt;5)-L-arabinanase (abn-ts) from Geobacillus thermodenitrificans.